Here is a 1110-residue protein sequence, read N- to C-terminus: Coiled-coil domain-containing protein 150 (1110 aa).

Coiled coils occupy residues 122-250, 288-313, 413-695, and 728-1048; these read LENL…TSAS, QDLL…SDLN, AAHA…KEDN, and SEIA…EAHR.

This is Coiled-coil domain-containing protein 150 (Ccdc150) from Mus musculus (Mouse).